A 329-amino-acid polypeptide reads, in one-letter code: Peroxidase 58 (329 aa).

A signal peptide spans 1-23 (MGLSKTIPLVLLPILMFGVLSNA). 4 cysteine pairs are disulfide-bonded: cysteine 34–cysteine 116, cysteine 67–cysteine 72, cysteine 122–cysteine 325, and cysteine 201–cysteine 234. A glycan (N-linked (GlcNAc...) asparagine) is linked at asparagine 36. The active-site Proton acceptor is the histidine 65. The Ca(2+) site is built by aspartate 66, valine 69, glycine 71, aspartate 73, and serine 75. Proline 164 is a substrate binding site. Histidine 194 lines the heme b pocket. Residue threonine 195 participates in Ca(2+) binding. The N-linked (GlcNAc...) asparagine glycan is linked to asparagine 210. 3 residues coordinate Ca(2+): aspartate 247, serine 250, and aspartate 255.

The protein belongs to the peroxidase family. Classical plant (class III) peroxidase subfamily. Heme b serves as cofactor. Requires Ca(2+) as cofactor.

It localises to the secreted. It catalyses the reaction 2 a phenolic donor + H2O2 = 2 a phenolic radical donor + 2 H2O. Functionally, removal of H(2)O(2), oxidation of toxic reductants, biosynthesis and degradation of lignin, suberization, auxin catabolism, response to environmental stresses such as wounding, pathogen attack and oxidative stress. These functions might be dependent on each isozyme/isoform in each plant tissue. In Arabidopsis thaliana (Mouse-ear cress), this protein is Peroxidase 58 (PER58).